The chain runs to 155 residues: MSRRSTAEKKTAKSDPIYHNRLVNMVVNRILKNGKKSLAYRILYRAIKNIQQKTEKNPLSVLRQAIRRVTPNVTVKARRVGGSTYRVPTEIRSTQGKVLAIRWLLGASRKRLGRNMKFKLSHELMDAARGNGNAIRKKEETHRMAEANRAFAHFR.

The protein belongs to the universal ribosomal protein uS7 family. As to quaternary structure, part of the 30S ribosomal subunit.

It is found in the plastid. The protein resides in the chloroplast. One of the primary rRNA binding proteins, it binds directly to 16S rRNA where it nucleates assembly of the head domain of the 30S subunit. The sequence is that of Small ribosomal subunit protein uS7c (rps7) from Pinus koraiensis (Korean pine).